A 1029-amino-acid chain; its full sequence is Sodium/potassium-transporting ATPase subunit alpha-4 (1029 aa).

The segment at 1 to 37 (MGLWGKKGTVAPHDQSPRRRPKKGLIKKKMVKREKQK) is disordered. Residues 1-95 (MGLWGKKGTV…NTVTPPPTTP (95 aa)) lie on the Cytoplasmic side of the membrane. The segment covering 18-36 (RRRPKKGLIKKKMVKREKQ) has biased composition (basic residues). Residues 90–92 (PPP) form an interaction with phosphoinositide-3 kinase region. Residues 96-116 (EWVKFCKQLFGGFSLLLWTGA) traverse the membrane as a helical segment. Residues 117–139 (ILCFVAYSIQIYFNEEPTKDNLY) lie on the Extracellular side of the membrane. Residues 140 to 160 (LSIVLSVVVIVTGCFSYYQEA) form a helical membrane-spanning segment. At 161 to 296 (KSSKIMESFK…VGQTPIAAEI (136 aa)) the chain is on the cytoplasmic side. Polar residues predominate over residues 223–237 (NSSLTGESEPQSRSP). Residues 223-242 (NSSLTGESEPQSRSPDFTHE) form a disordered region. Residues 297 to 316 (EHFIHLITVVAVFLGVTFFA) traverse the membrane as a helical segment. The Extracellular portion of the chain corresponds to 317 to 328 (LSLLLGYGWLEA). Residues 329–346 (IIFLIGIIVANVPEGLLA) form a helical membrane-spanning segment. Residues 347–778 (TVTVCLTLTA…EEGRLIFDNL (432 aa)) lie on the Cytoplasmic side of the membrane. Aspartate 384 serves as the catalytic 4-aspartylphosphate intermediate. Residues aspartate 723 and aspartate 727 each coordinate Mg(2+). Residues 779 to 798 (KKSIMYTLTSNIPEITPFLM) form a helical membrane-spanning segment. The Extracellular portion of the chain corresponds to 799-808 (FIILGIPLPL). The chain crosses the membrane as a helical span at residues 809–829 (GTITILCIDLGTDMVPAISLA). At 830–849 (YESAESDIMKRLPRNPKTDN) the chain is on the cytoplasmic side. A helical transmembrane segment spans residues 850–872 (LVNHRLIGMAYGQIGMIQALAGF). Residues 873–924 (FTYFVILAENGFRPVDLLGIRLHWEDKYLNDLEDSYGQQWTYEQRKVVEFTC) lie on the Extracellular side of the membrane. The helical transmembrane segment at 925-944 (QTAFFVTIVVVQWADLIISK) threads the bilayer. Topologically, residues 945 to 957 (TRRNSLFQQGMRN) are cytoplasmic. The residue at position 949 (serine 949) is a Phosphoserine; by PKA. The helical transmembrane segment at 958–976 (KVLIFGILEETLLAAFLSY) threads the bilayer. Residues 977–991 (TPGMDVALRMYPLKI) are Extracellular-facing. Residues 992-1012 (TWWLCAIPYSILIFVYDEIRK) traverse the membrane as a helical segment. The Cytoplasmic segment spans residues 1013–1029 (LLIRQHPDGWVERETYY).

The protein belongs to the cation transport ATPase (P-type) (TC 3.A.3) family. Type IIC subfamily. In terms of assembly, the sodium/potassium-transporting ATPase is composed of a catalytic alpha subunit, an auxiliary non-catalytic beta subunit and an additional regulatory subunit. In terms of tissue distribution, specifically expressed in testis. Found in very low levels in skeletal muscle. Expressed in mature sperm (at protein level).

The protein resides in the cell membrane. It carries out the reaction K(+)(out) + Na(+)(in) + ATP + H2O = K(+)(in) + Na(+)(out) + ADP + phosphate + H(+). With respect to regulation, specifically inhibited by an endogenous cardiac glycoside, ouabain. In terms of biological role, this is the catalytic component of the active enzyme, which catalyzes the hydrolysis of ATP coupled with the exchange of sodium and potassium ions across the plasma membrane. This action creates the electrochemical gradient of sodium and potassium ions, providing the energy for active transport of various nutrients. Plays a role in sperm motility. The polypeptide is Sodium/potassium-transporting ATPase subunit alpha-4 (Homo sapiens (Human)).